The sequence spans 150 residues: Endoribonuclease YbeY (150 aa).

3 residues coordinate Zn(2+): H112, H116, and H122.

This sequence belongs to the endoribonuclease YbeY family. It depends on Zn(2+) as a cofactor.

The protein localises to the cytoplasm. Single strand-specific metallo-endoribonuclease involved in late-stage 70S ribosome quality control and in maturation of the 3' terminus of the 16S rRNA. This is Endoribonuclease YbeY from Geobacter sulfurreducens (strain ATCC 51573 / DSM 12127 / PCA).